Reading from the N-terminus, the 2890-residue chain is Bifunctional DNA-directed RNA polymerase subunit beta-beta' (2890 aa).

A DNA-directed RNA polymerase subunit beta region spans residues 1–1377 (MSKKIPLKNR…DINIFGDDVD (1377 aa)). Positions 1384-2890 (PIVIKEDDRP…LRTLEDDPKF (1507 aa)) are DNA-directed RNA polymerase subunit beta'. 4 residues coordinate Zn(2+): cysteine 1449, cysteine 1451, cysteine 1465, and cysteine 1468. Positions 1849, 1851, and 1853 each coordinate Mg(2+). Cysteine 2179, cysteine 2253, cysteine 2260, and cysteine 2263 together coordinate Zn(2+).

In the N-terminal section; belongs to the RNA polymerase beta chain family. The protein in the C-terminal section; belongs to the RNA polymerase beta' chain family. In terms of assembly, the RNAP catalytic core consists of 2 alpha, 1 beta/beta' and 1 omega subunit. When a sigma factor is associated with the core the holoenzyme is formed, which can initiate transcription. Requires Mg(2+) as cofactor. Zn(2+) serves as cofactor.

It carries out the reaction RNA(n) + a ribonucleoside 5'-triphosphate = RNA(n+1) + diphosphate. Its function is as follows. DNA-dependent RNA polymerase catalyzes the transcription of DNA into RNA using the four ribonucleoside triphosphates as substrates. The protein is Bifunctional DNA-directed RNA polymerase subunit beta-beta' (rpoBC) of Helicobacter pylori (strain Shi470).